A 140-amino-acid chain; its full sequence is MTVIDAKGLILGRLASSVAKQLLSGDEKVYIINAEKAIISGSRAATLREYRETRDRGATEFGPYFPKRPDRILKRTIRGMLPYKRARGRDAMSRLKVYVGVPYELKGAETTTIADADMRLLSSNKYVELGEVSQKMGSKF.

It belongs to the universal ribosomal protein uL13 family. Part of the 50S ribosomal subunit.

Its function is as follows. This protein is one of the early assembly proteins of the 50S ribosomal subunit, although it is not seen to bind rRNA by itself. It is important during the early stages of 50S assembly. The chain is Large ribosomal subunit protein uL13 from Methanosarcina mazei (strain ATCC BAA-159 / DSM 3647 / Goe1 / Go1 / JCM 11833 / OCM 88) (Methanosarcina frisia).